A 210-amino-acid polypeptide reads, in one-letter code: MTYAVKEIFYTLQGEGANAGRPAVFCRFAGCNLWSGREEDRAQAVCRFCDTDFVGTDGENGGKFKDADALVATIAGLWPAGEAHRFVVCTGGEPMLQLDQPLVDALHAAGFGIAIETNGSLPVLESIDWICVSPKADAPLVVTKGNELKVVIPQDNQRLADYAKLDFEYFLVQPMDGPSRDLNTKLAIDWCKRHPQWRLSMQTHKYLNIP.

Residues 12 to 14 and arginine 27 each bind substrate; that span reads LQG. A Radical SAM core domain is found at 18–210; the sequence is NAGRPAVFCR…MQTHKYLNIP (193 aa). [4Fe-4S] cluster contacts are provided by cysteine 31, cysteine 46, and cysteine 49. 48-50 is a binding site for S-adenosyl-L-methionine; the sequence is FCD. Residue threonine 51 participates in Mg(2+) binding. Threonine 90 lines the substrate pocket. Residues glycine 92, 133–135, and 173–176 contribute to the S-adenosyl-L-methionine site; these read SPK and QPMD. Proline 210 is a substrate binding site.

The protein belongs to the radical SAM superfamily. 7-carboxy-7-deazaguanine synthase family. Homodimer. It depends on [4Fe-4S] cluster as a cofactor. The cofactor is S-adenosyl-L-methionine. Mg(2+) is required as a cofactor.

It carries out the reaction 6-carboxy-5,6,7,8-tetrahydropterin + H(+) = 7-carboxy-7-deazaguanine + NH4(+). The protein operates within purine metabolism; 7-cyano-7-deazaguanine biosynthesis. Functionally, catalyzes the complex heterocyclic radical-mediated conversion of 6-carboxy-5,6,7,8-tetrahydropterin (CPH4) to 7-carboxy-7-deazaguanine (CDG), a step common to the biosynthetic pathways of all 7-deazapurine-containing compounds. This Burkholderia multivorans (strain ATCC 17616 / 249) protein is 7-carboxy-7-deazaguanine synthase.